A 261-amino-acid chain; its full sequence is Cytochrome c oxidase subunit 3 (261 aa).

The Mitochondrial matrix segment spans residues 1-15 (MTHQTHAYHMVNPSP). The chain crosses the membrane as a helical span at residues 16–34 (WPLTGALSALLMTSGLIMW). Residues 35–40 (FHFNST) are Mitochondrial intermembrane-facing. The helical transmembrane segment at 41-66 (TLLTLGLTTNMLTMYQWWRDVIREST) threads the bilayer. Residues 67 to 72 (FQGHHT) lie on the Mitochondrial matrix side of the membrane. A helical transmembrane segment spans residues 73–105 (PTVQKGLRYGMILFIISEVLFFTGFFWAFYHSS). Topologically, residues 106 to 128 (LAPTPELGGCWPPTGIHPLNPLE) are mitochondrial intermembrane. Residues 129–152 (VPLLNTSVLLASGVSITWAHHSLM) traverse the membrane as a helical segment. The Mitochondrial matrix segment spans residues 153 to 155 (EGN). Residues 156–183 (RNPMLQALFITIALGIYFTLLQASEYYE) form a helical membrane-spanning segment. The Mitochondrial intermembrane portion of the chain corresponds to 184-190 (APFTISD). Residues 191 to 223 (GVYGSTFFVATGFHGLHVIIGSTFLIVCFFRQL) form a helical membrane-spanning segment. At 224-232 (KFHFTSNHH) the chain is on the mitochondrial matrix side. Residues 233–256 (FGFEAAAWYWHFVDVVWLFLYVSI) traverse the membrane as a helical segment. Residues 257–261 (YWWGS) lie on the Mitochondrial intermembrane side of the membrane.

It belongs to the cytochrome c oxidase subunit 3 family. As to quaternary structure, component of the cytochrome c oxidase (complex IV, CIV), a multisubunit enzyme composed of 14 subunits. The complex is composed of a catalytic core of 3 subunits MT-CO1, MT-CO2 and MT-CO3, encoded in the mitochondrial DNA, and 11 supernumerary subunits COX4I, COX5A, COX5B, COX6A, COX6B, COX6C, COX7A, COX7B, COX7C, COX8 and NDUFA4, which are encoded in the nuclear genome. The complex exists as a monomer or a dimer and forms supercomplexes (SCs) in the inner mitochondrial membrane with NADH-ubiquinone oxidoreductase (complex I, CI) and ubiquinol-cytochrome c oxidoreductase (cytochrome b-c1 complex, complex III, CIII), resulting in different assemblies (supercomplex SCI(1)III(2)IV(1) and megacomplex MCI(2)III(2)IV(2)).

Its subcellular location is the mitochondrion inner membrane. It carries out the reaction 4 Fe(II)-[cytochrome c] + O2 + 8 H(+)(in) = 4 Fe(III)-[cytochrome c] + 2 H2O + 4 H(+)(out). Its function is as follows. Component of the cytochrome c oxidase, the last enzyme in the mitochondrial electron transport chain which drives oxidative phosphorylation. The respiratory chain contains 3 multisubunit complexes succinate dehydrogenase (complex II, CII), ubiquinol-cytochrome c oxidoreductase (cytochrome b-c1 complex, complex III, CIII) and cytochrome c oxidase (complex IV, CIV), that cooperate to transfer electrons derived from NADH and succinate to molecular oxygen, creating an electrochemical gradient over the inner membrane that drives transmembrane transport and the ATP synthase. Cytochrome c oxidase is the component of the respiratory chain that catalyzes the reduction of oxygen to water. Electrons originating from reduced cytochrome c in the intermembrane space (IMS) are transferred via the dinuclear copper A center (CU(A)) of subunit 2 and heme A of subunit 1 to the active site in subunit 1, a binuclear center (BNC) formed by heme A3 and copper B (CU(B)). The BNC reduces molecular oxygen to 2 water molecules using 4 electrons from cytochrome c in the IMS and 4 protons from the mitochondrial matrix. This Madoqua guentheri (Guenther's dik-dik) protein is Cytochrome c oxidase subunit 3 (MT-CO3).